Consider the following 429-residue polypeptide: Transcriptional coactivator AacuS (429 aa).

The 65-residue stretch at 80-144 (MASQTQLLAC…GFLQEPELGH (65 aa)) folds into the HTH iclR-type domain. A DNA-binding region (H-T-H motif) is located at residues 110 to 129 (IKDVAELIGVPENHICRIVR).

Its subcellular location is the nucleus. Transcriptional coactivator; part of the gene cluster that mediates the biosynthesis of the tetrahydroxanthone dimer secalonic acid D. This Aspergillus aculeatus (strain ATCC 16872 / CBS 172.66 / WB 5094) protein is Transcriptional coactivator AacuS.